The following is a 106-amino-acid chain: Iron-sulfur cluster assembly protein CyaY (106 aa).

The protein belongs to the frataxin family.

In terms of biological role, involved in iron-sulfur (Fe-S) cluster assembly. May act as a regulator of Fe-S biogenesis. The sequence is that of Iron-sulfur cluster assembly protein CyaY from Shigella flexneri.